The chain runs to 119 residues: UPF0102 protein Nther_1376 (119 aa).

This sequence belongs to the UPF0102 family.

This is UPF0102 protein Nther_1376 from Natranaerobius thermophilus (strain ATCC BAA-1301 / DSM 18059 / JW/NM-WN-LF).